Here is a 296-residue protein sequence, read N- to C-terminus: Probable endonuclease 4 (296 aa).

Zn(2+) contacts are provided by His68, His109, Glu144, Asp178, His181, His213, Asp226, His228, and Glu258.

The protein belongs to the AP endonuclease 2 family. Zn(2+) serves as cofactor.

It catalyses the reaction Endonucleolytic cleavage to 5'-phosphooligonucleotide end-products.. Functionally, endonuclease IV plays a role in DNA repair. It cleaves phosphodiester bonds at apurinic or apyrimidinic (AP) sites, generating a 3'-hydroxyl group and a 5'-terminal sugar phosphate. In Staphylococcus aureus (strain MRSA252), this protein is Probable endonuclease 4.